The primary structure comprises 556 residues: Vetispiradiene synthase 1 (556 aa).

Asp-309, Asp-313, Asp-452, Thr-456, and Glu-460 together coordinate Mg(2+). Residues 309–313 (DDTFD) carry the DDXXD motif motif.

Belongs to the terpene synthase family. Tpsa subfamily. The cofactor is Mg(2+).

It is found in the cytoplasm. The catalysed reaction is (2E,6E)-farnesyl diphosphate = (-)-vetispiradiene + diphosphate. It functions in the pathway secondary metabolite biosynthesis; terpenoid biosynthesis. Sesquiterpene synthase that catalyzes the formation of vetispiradiene from trans,trans-farnesyl diphosphate. The initial internal cyclization produces the monocyclic intermediate germacrene A. This Solanum tuberosum (Potato) protein is Vetispiradiene synthase 1 (PVS1).